Reading from the N-terminus, the 138-residue chain is Sec-independent protein translocase protein TatB (138 aa).

A helical transmembrane segment spans residues 1-21 (MFDIGATELLVIAIVAILVIG). Residues 74-138 (MAKHPADQMQ…EPRLPLEGRD (65 aa)) form a disordered region. Residues 83–97 (QPLDAPDPALSAAEA) are compositionally biased toward low complexity. Residues 98-138 (RAAHTEAAKPARAAEETQADRASADEHPAASEPRLPLEGRD) show a composition bias toward basic and acidic residues.

Belongs to the TatB family. The Tat system comprises two distinct complexes: a TatABC complex, containing multiple copies of TatA, TatB and TatC subunits, and a separate TatA complex, containing only TatA subunits. Substrates initially bind to the TatABC complex, which probably triggers association of the separate TatA complex to form the active translocon.

It localises to the cell inner membrane. Part of the twin-arginine translocation (Tat) system that transports large folded proteins containing a characteristic twin-arginine motif in their signal peptide across membranes. Together with TatC, TatB is part of a receptor directly interacting with Tat signal peptides. TatB may form an oligomeric binding site that transiently accommodates folded Tat precursor proteins before their translocation. The chain is Sec-independent protein translocase protein TatB from Erythrobacter litoralis (strain HTCC2594).